The sequence spans 599 residues: Calmodulin-binding protein 60 E (599 aa).

The interval 1–21 (MNKRGYECSQEDTDKLPESKR) is disordered. The interval 1-80 (MNKRGYECSQ…LTSRSPEPKR (80 aa)) is calmodulin-binding. Positions 150–273 (EDDEDWTREH…VLHKKLLKAN (124 aa)) are DNA-binding.

The protein belongs to the plant ACBP60 protein family. In terms of assembly, interacts with calmodulin (CaM).

It localises to the nucleus. Transcription activator that binds DNA in a sequence-specific manner, likely 5'-GAAATTTTGG-3', to promote the expression of target genes. This Arabidopsis thaliana (Mouse-ear cress) protein is Calmodulin-binding protein 60 E.